The following is a 61-amino-acid chain: UPF0434 protein Pfl01_4174 (61 aa).

The protein belongs to the UPF0434 family.

This is UPF0434 protein Pfl01_4174 from Pseudomonas fluorescens (strain Pf0-1).